The sequence spans 657 residues: Probable serine/threonine-protein kinase CA_C1728 (657 aa).

The Protein kinase domain occupies 10-274 (YKIEEEIGVG…ELSNVKNNYV (265 aa)). ATP is bound by residues 16-24 (IGVGGTAVV) and lysine 39. Aspartate 143 serves as the catalytic Proton acceptor. Positions 286-334 (PAQIQNESNPNNKLDNDDTYYNGEPYNKEQPQEEPQEENEEPKNKIKGN) are disordered. Over residues 288 to 298 (QIQNESNPNNK) the composition is skewed to polar residues. PASTA domains lie at 375-441 (SVSK…DISS), 443-509 (DTDQ…VISR), and 512-577 (EVKK…VIGR). The segment at 581–657 (TAVQPPNNNN…TNTPNGTGQK (77 aa)) is disordered. Composition is skewed to low complexity over residues 584–600 (QPPN…QNQN), 613–637 (PTGG…PAGG), and 645–657 (GNVT…TGQK).

Belongs to the protein kinase superfamily. Ser/Thr protein kinase family.

It catalyses the reaction L-seryl-[protein] + ATP = O-phospho-L-seryl-[protein] + ADP + H(+). The catalysed reaction is L-threonyl-[protein] + ATP = O-phospho-L-threonyl-[protein] + ADP + H(+). The protein is Probable serine/threonine-protein kinase CA_C1728 of Clostridium acetobutylicum (strain ATCC 824 / DSM 792 / JCM 1419 / IAM 19013 / LMG 5710 / NBRC 13948 / NRRL B-527 / VKM B-1787 / 2291 / W).